Consider the following 149-residue polypeptide: Probable flagellum biosynthesis repressor protein FlbT (149 aa).

This sequence belongs to the FlbT family.

Functionally, has a post-transcriptional repressor function in flagellum biogenesis. Associates with the 5'-UTR of fljK mRNA and promotes its degradation. The polypeptide is Probable flagellum biosynthesis repressor protein FlbT (Rhizobium leguminosarum bv. trifolii (strain WSM2304)).